Here is a 208-residue protein sequence, read N- to C-terminus: Protein-L-isoaspartate O-methyltransferase (208 aa).

Residue Ser59 is part of the active site.

This sequence belongs to the methyltransferase superfamily. L-isoaspartyl/D-aspartyl protein methyltransferase family.

The protein localises to the cytoplasm. It carries out the reaction [protein]-L-isoaspartate + S-adenosyl-L-methionine = [protein]-L-isoaspartate alpha-methyl ester + S-adenosyl-L-homocysteine. Catalyzes the methyl esterification of L-isoaspartyl residues in peptides and proteins that result from spontaneous decomposition of normal L-aspartyl and L-asparaginyl residues. It plays a role in the repair and/or degradation of damaged proteins. The sequence is that of Protein-L-isoaspartate O-methyltransferase from Sodalis glossinidius (strain morsitans).